A 333-amino-acid polypeptide reads, in one-letter code: Probable tRNA-dihydrouridine synthase 1 (333 aa).

FMN is bound by residues 17 to 19 and Gln71; that span reads PMA. The active-site Proton donor is the Cys102. FMN-binding positions include Lys141, 202 to 204, and 226 to 227; these read NGD and GR.

Belongs to the Dus family. The cofactor is FMN.

It catalyses the reaction a 5,6-dihydrouridine in tRNA + NAD(+) = a uridine in tRNA + NADH + H(+). The enzyme catalyses a 5,6-dihydrouridine in tRNA + NADP(+) = a uridine in tRNA + NADPH + H(+). Functionally, catalyzes the synthesis of 5,6-dihydrouridine (D), a modified base found in the D-loop of most tRNAs, via the reduction of the C5-C6 double bond in target uridines. This chain is Probable tRNA-dihydrouridine synthase 1 (dus1), found in Bacillus subtilis (strain 168).